The chain runs to 125 residues: Large ribosomal subunit protein bL12 (125 aa).

Belongs to the bacterial ribosomal protein bL12 family. As to quaternary structure, homodimer. Part of the ribosomal stalk of the 50S ribosomal subunit. Forms a multimeric L10(L12)X complex, where L10 forms an elongated spine to which 2 to 4 L12 dimers bind in a sequential fashion. Binds GTP-bound translation factors.

Functionally, forms part of the ribosomal stalk which helps the ribosome interact with GTP-bound translation factors. Is thus essential for accurate translation. This Campylobacter lari (strain RM2100 / D67 / ATCC BAA-1060) protein is Large ribosomal subunit protein bL12.